The following is a 315-amino-acid chain: Adenine deaminase (315 aa).

3 residues coordinate Zn(2+): H14, H16, and H194. E197 serves as the catalytic Proton donor. Zn(2+) is bound at residue D275. D276 is a substrate binding site.

It belongs to the metallo-dependent hydrolases superfamily. Adenosine and AMP deaminases family. Adenine deaminase type 2 subfamily. Zn(2+) is required as a cofactor.

It carries out the reaction adenine + H2O + H(+) = hypoxanthine + NH4(+). In terms of biological role, catalyzes the hydrolytic deamination of adenine to hypoxanthine. Plays an important role in the purine salvage pathway and in nitrogen catabolism. The polypeptide is Adenine deaminase (Pseudomonas putida (strain GB-1)).